Consider the following 500-residue polypeptide: Probable cytosol aminopeptidase (500 aa).

The Mn(2+) site is built by Lys-265 and Asp-270. The active site involves Lys-277. Asp-288, Asp-347, and Glu-349 together coordinate Mn(2+). Residue Arg-351 is part of the active site.

It belongs to the peptidase M17 family. The cofactor is Mn(2+).

It is found in the cytoplasm. The catalysed reaction is Release of an N-terminal amino acid, Xaa-|-Yaa-, in which Xaa is preferably Leu, but may be other amino acids including Pro although not Arg or Lys, and Yaa may be Pro. Amino acid amides and methyl esters are also readily hydrolyzed, but rates on arylamides are exceedingly low.. It carries out the reaction Release of an N-terminal amino acid, preferentially leucine, but not glutamic or aspartic acids.. In terms of biological role, presumably involved in the processing and regular turnover of intracellular proteins. Catalyzes the removal of unsubstituted N-terminal amino acids from various peptides. This Corynebacterium glutamicum (strain ATCC 13032 / DSM 20300 / JCM 1318 / BCRC 11384 / CCUG 27702 / LMG 3730 / NBRC 12168 / NCIMB 10025 / NRRL B-2784 / 534) protein is Probable cytosol aminopeptidase.